Reading from the N-terminus, the 433-residue chain is Histidinol dehydrogenase (433 aa).

3 residues coordinate NAD(+): Tyr-129, Gln-191, and Asn-214. Substrate-binding residues include Ser-237, Gln-259, and His-262. Zn(2+) contacts are provided by Gln-259 and His-262. Catalysis depends on proton acceptor residues Glu-326 and His-327. Residues His-327, Asp-360, Glu-414, and His-419 each coordinate substrate. Residue Asp-360 coordinates Zn(2+). His-419 serves as a coordination point for Zn(2+).

This sequence belongs to the histidinol dehydrogenase family. Requires Zn(2+) as cofactor.

It carries out the reaction L-histidinol + 2 NAD(+) + H2O = L-histidine + 2 NADH + 3 H(+). It participates in amino-acid biosynthesis; L-histidine biosynthesis; L-histidine from 5-phospho-alpha-D-ribose 1-diphosphate: step 9/9. Catalyzes the sequential NAD-dependent oxidations of L-histidinol to L-histidinaldehyde and then to L-histidine. In Methanosarcina barkeri (strain Fusaro / DSM 804), this protein is Histidinol dehydrogenase.